The sequence spans 94 residues: Co-chaperonin GroES (94 aa).

This sequence belongs to the GroES chaperonin family. Heptamer of 7 subunits arranged in a ring. Interacts with the chaperonin GroEL.

It localises to the cytoplasm. In terms of biological role, together with the chaperonin GroEL, plays an essential role in assisting protein folding. The GroEL-GroES system forms a nano-cage that allows encapsulation of the non-native substrate proteins and provides a physical environment optimized to promote and accelerate protein folding. GroES binds to the apical surface of the GroEL ring, thereby capping the opening of the GroEL channel. This Clostridium botulinum (strain Eklund 17B / Type B) protein is Co-chaperonin GroES.